Reading from the N-terminus, the 353-residue chain is Probable D-xylulose reductase A (353 aa).

3 residues coordinate Zn(2+): Cys42, His67, and Glu68. 177-182 (GAGPVG) is a binding site for NAD(+).

Belongs to the zinc-containing alcohol dehydrogenase family. Zn(2+) serves as cofactor.

The catalysed reaction is xylitol + NAD(+) = D-xylulose + NADH + H(+). It functions in the pathway carbohydrate degradation; L-arabinose degradation via L-arabinitol; D-xylulose 5-phosphate from L-arabinose (fungal route): step 4/5. Its function is as follows. Xylitol dehydrogenase which catalyzes the conversion of xylitol to D-xylulose. Xylose is a major component of hemicelluloses such as xylan. Most fungi utilize D-xylose via three enzymatic reactions, xylose reductase (XR), xylitol dehydrogenase (XDH), and xylulokinase, to form xylulose 5-phosphate, which enters pentose phosphate pathway. This Aspergillus terreus (strain NIH 2624 / FGSC A1156) protein is Probable D-xylulose reductase A (xdhA).